The primary structure comprises 392 residues: Succinate--CoA ligase [ADP-forming] subunit beta (392 aa).

The ATP-grasp domain occupies 9–248; that stretch reads KDILKKFGVS…TNEEDPFEVE (240 aa). ATP is bound by residues Lys-50, 57–59, Glu-103, Met-106, and Glu-111; that span reads GRG. Positions 203 and 217 each coordinate Mg(2+). Residues Asn-268 and 325–327 each bind substrate; that span reads GIV.

It belongs to the succinate/malate CoA ligase beta subunit family. Heterotetramer of two alpha and two beta subunits. The cofactor is Mg(2+).

The enzyme catalyses succinate + ATP + CoA = succinyl-CoA + ADP + phosphate. The catalysed reaction is GTP + succinate + CoA = succinyl-CoA + GDP + phosphate. Its pathway is carbohydrate metabolism; tricarboxylic acid cycle; succinate from succinyl-CoA (ligase route): step 1/1. In terms of biological role, succinyl-CoA synthetase functions in the citric acid cycle (TCA), coupling the hydrolysis of succinyl-CoA to the synthesis of either ATP or GTP and thus represents the only step of substrate-level phosphorylation in the TCA. The beta subunit provides nucleotide specificity of the enzyme and binds the substrate succinate, while the binding sites for coenzyme A and phosphate are found in the alpha subunit. This Chlorobium limicola (strain DSM 245 / NBRC 103803 / 6330) protein is Succinate--CoA ligase [ADP-forming] subunit beta.